Reading from the N-terminus, the 304-residue chain is HPr kinase/phosphorylase (304 aa).

Catalysis depends on residues histidine 136 and lysine 157. Residue 151–158 coordinates ATP; sequence GESGIGKS. Residue serine 158 participates in Mg(2+) binding. Catalysis depends on aspartate 175, which acts as the Proton acceptor; for phosphorylation activity. Proton donor; for dephosphorylation activity. The tract at residues 198 to 207 is important for the catalytic mechanism of both phosphorylation and dephosphorylation; it reads LEVRGMGIID. Glutamate 199 is a Mg(2+) binding site. Residue arginine 240 is part of the active site. The interval 261 to 266 is important for the catalytic mechanism of dephosphorylation; that stretch reads PIRPGR.

The protein belongs to the HPrK/P family. Homohexamer. Requires Mg(2+) as cofactor.

The catalysed reaction is [HPr protein]-L-serine + ATP = [HPr protein]-O-phospho-L-serine + ADP + H(+). It catalyses the reaction [HPr protein]-O-phospho-L-serine + phosphate + H(+) = [HPr protein]-L-serine + diphosphate. Functionally, catalyzes the ATP- as well as the pyrophosphate-dependent phosphorylation of a specific serine residue in HPr, a phosphocarrier protein of the phosphoenolpyruvate-dependent sugar phosphotransferase system (PTS). HprK/P also catalyzes the pyrophosphate-producing, inorganic phosphate-dependent dephosphorylation (phosphorolysis) of seryl-phosphorylated HPr (P-Ser-HPr). The two antagonistic activities of HprK/P are regulated by several intracellular metabolites, which change their concentration in response to the absence or presence of rapidly metabolisable carbon sources (glucose, fructose, etc.) in the growth medium. Therefore, by controlling the phosphorylation state of HPr, HPrK/P is a sensor enzyme that plays a major role in the regulation of carbon metabolism and sugar transport: it mediates carbon catabolite repression (CCR), and regulates PTS-catalyzed carbohydrate uptake and inducer exclusion. The chain is HPr kinase/phosphorylase from Clostridium acetobutylicum (strain ATCC 824 / DSM 792 / JCM 1419 / IAM 19013 / LMG 5710 / NBRC 13948 / NRRL B-527 / VKM B-1787 / 2291 / W).